A 606-amino-acid chain; its full sequence is NADH-ubiquinone oxidoreductase chain 5 (606 aa).

A run of 16 helical transmembrane segments spans residues 1–21, 35–55, 87–107, 114–134, 140–160, 171–191, 211–233, 241–261, 272–292, 301–320, 325–347, 366–386, 413–433, 457–477, 482–502, and 582–602; these read MNLFTSFVLLTLLILFTPIMV, YVKNIVFCAFITSLIPAMMYL, LMFMPVALFITWSIMEFSMWY, INQFFKYLLLFLITMLILVTA, LFIGWEGVGIMSFLLIGWWFG, AILYNRIGDIGLLASMAWFLS, FPLMGLVLAAAGKSAQFGLHPWL, TPVSALLHSSTMVVAGIFLLV, LIQTVTLCLGAITTLFTAICA, IIAFSTSSQLGLMMVTIGLN, AFLHICTHAFFKAMLFLCSGSII, LPFTTTALIIGCLALTGMPFL, LTATSLTAVYSTRIIFFALLG, LLIGSIFAGFILSNSIPPVIT, MPLHLKLTALTMTTLGFIIAF, and GLIKLYFLSFLITITLSMILF.

The protein belongs to the complex I subunit 5 family. As to quaternary structure, core subunit of respiratory chain NADH dehydrogenase (Complex I) which is composed of 45 different subunits.

It is found in the mitochondrion inner membrane. It catalyses the reaction a ubiquinone + NADH + 5 H(+)(in) = a ubiquinol + NAD(+) + 4 H(+)(out). Its function is as follows. Core subunit of the mitochondrial membrane respiratory chain NADH dehydrogenase (Complex I) which catalyzes electron transfer from NADH through the respiratory chain, using ubiquinone as an electron acceptor. Essential for the catalytic activity and assembly of complex I. This is NADH-ubiquinone oxidoreductase chain 5 (MT-ND5) from Balaenoptera musculus (Blue whale).